A 284-amino-acid chain; its full sequence is D-tagatose-1,6-bisphosphate aldolase subunit GatY (284 aa).

Residue Asp82 is the Proton donor of the active site. Residues His83 and His180 each contribute to the Zn(2+) site. A dihydroxyacetone phosphate-binding site is contributed by Gly181. Zn(2+) is bound at residue His208. Residues 209–211 (GAS) and 230–233 (NVAT) each bind dihydroxyacetone phosphate.

The protein belongs to the class II fructose-bisphosphate aldolase family. TagBP aldolase GatY subfamily. In terms of assembly, forms a complex with GatZ. Requires Zn(2+) as cofactor.

The enzyme catalyses D-tagatofuranose 1,6-bisphosphate = D-glyceraldehyde 3-phosphate + dihydroxyacetone phosphate. It functions in the pathway carbohydrate metabolism; D-tagatose 6-phosphate degradation; D-glyceraldehyde 3-phosphate and glycerone phosphate from D-tagatose 6-phosphate: step 2/2. In terms of biological role, catalytic subunit of the tagatose-1,6-bisphosphate aldolase GatYZ, which catalyzes the reversible aldol condensation of dihydroxyacetone phosphate (DHAP or glycerone-phosphate) with glyceraldehyde 3-phosphate (G3P) to produce tagatose 1,6-bisphosphate (TBP). Requires GatZ subunit for full activity and stability. Is involved in the catabolism of galactitol and D-tagatose. This chain is D-tagatose-1,6-bisphosphate aldolase subunit GatY (gatY), found in Klebsiella oxytoca.